Here is a 361-residue protein sequence, read N- to C-terminus: Transposase A from transposon Tn554 (361 aa).

The Core-binding (CB) domain occupies 23–120 (YQLIEPVMKF…VVMSFLDYLS (98 aa)). One can recognise a Tyr recombinase domain in the interval 163–351 (KQIRTLRSKE…SDQDMKNEFN (189 aa)). Catalysis depends on residues arginine 198, lysine 232, histidine 302, arginine 305, and histidine 328. The O-(3'-phospho-DNA)-tyrosine intermediate role is filled by tyrosine 338.

It belongs to the 'phage' integrase family.

Its function is as follows. One of three proteins encoded by transposon Tn554 required for its transposition. The polypeptide is Transposase A from transposon Tn554 (tnpA1) (Staphylococcus aureus (strain Mu50 / ATCC 700699)).